A 126-amino-acid chain; its full sequence is MCTYIITQSFFFLPCLSFLFFKLVGFFDSVFTAGKSLRIMFELPIFDKLTSCFAAIDCSATSLDIPFAEEELFLMLVSEPVLIPFLFVFEFMLICKPCGSRSRFGFPVKNVSDFEETLEFDPTLLV.

Topologically, residues 1–9 (MCTYIITQS) are extracellular. Residues 10-30 (FFFLPCLSFLFFKLVGFFDSV) traverse the membrane as a helical segment. The Cytoplasmic portion of the chain corresponds to 31–73 (FTAGKSLRIMFELPIFDKLTSCFAAIDCSATSLDIPFAEEELF). A helical transmembrane segment spans residues 74 to 94 (LMLVSEPVLIPFLFVFEFMLI). The Extracellular segment spans residues 95–126 (CKPCGSRSRFGFPVKNVSDFEETLEFDPTLLV).

It localises to the membrane. This is an uncharacterized protein from Saccharomyces cerevisiae (strain ATCC 204508 / S288c) (Baker's yeast).